The following is a 346-amino-acid chain: Methylthioribose-1-phosphate isomerase (346 aa).

Residues 54–56 (RGA), R91, and Q192 each bind substrate. Residue D233 is the Proton donor of the active site. 243 to 244 (NK) is a binding site for substrate.

This sequence belongs to the eIF-2B alpha/beta/delta subunits family. MtnA subfamily.

It catalyses the reaction 5-(methylsulfanyl)-alpha-D-ribose 1-phosphate = 5-(methylsulfanyl)-D-ribulose 1-phosphate. It participates in amino-acid biosynthesis; L-methionine biosynthesis via salvage pathway; L-methionine from S-methyl-5-thio-alpha-D-ribose 1-phosphate: step 1/6. Its function is as follows. Catalyzes the interconversion of methylthioribose-1-phosphate (MTR-1-P) into methylthioribulose-1-phosphate (MTRu-1-P). The sequence is that of Methylthioribose-1-phosphate isomerase from Yersinia pseudotuberculosis serotype O:1b (strain IP 31758).